The chain runs to 551 residues: Solute carrier family 22 member 13 (551 aa).

Residues 1 to 20 lie on the Cytoplasmic side of the membrane; it reads MAQFVQVLAEIGDFGRFQIQ. Residues 21–41 traverse the membrane as a helical segment; that stretch reads LLILLCVLNFLSPFYFFAHVF. The Extracellular segment spans residues 42 to 138; the sequence is MVLDEPHHCA…LVCDRKHLKD (97 aa). N57, N61, N92, and N104 each carry an N-linked (GlcNAc...) asparagine glycan. Residues 139 to 159 form a helical membrane-spanning segment; that stretch reads TTQSVFMAGLLVGTLMFGPLC. At 160–167 the chain is on the cytoplasmic side; sequence DRIGRKAT. A helical transmembrane segment spans residues 168-188; that stretch reads ILAQLLLFTLIGLATAFVPSF. Over 189 to 195 the chain is Extracellular; that stretch reads ELYMALR. A helical transmembrane segment spans residues 196–216; sequence FAVATAVAGLSFSNVTLLTEW. The Cytoplasmic portion of the chain corresponds to 217 to 224; sequence VGPSWRTQ. A helical membrane pass occupies residues 225-245; sequence AVVLAQCNFSLGQMVLAGLAY. Residues 246–251 are Extracellular-facing; sequence GFRNWR. Residues 252-272 traverse the membrane as a helical segment; it reads LLQITGTAPGLLLFFYFWALP. At 273–332 the chain is on the cytoplasmic side; the sequence is ESARWLLTRGRMDEAIQLIQKAASVNRRKLSPELMNQLVPEKTGPSGNALDLFRHPQLRK. Residues 333–353 traverse the membrane as a helical segment; that stretch reads VTLIIFCVWFVDSLGYYGLSL. Position 354 (Q354) is a topological domain, extracellular. Residues 355–375 form a helical membrane-spanning segment; the sequence is VGDFGLDVYLTQLIFGAVEVP. At 376–397 the chain is on the cytoplasmic side; the sequence is ARCSSIFMMQRFGRKWSQLGTL. A helical membrane pass occupies residues 398–418; it reads VLGGLMCIIIIFIPADLPVVV. The Extracellular segment spans residues 419–427; that stretch reads TMLAVVGKM. A helical membrane pass occupies residues 428 to 448; that stretch reads ATAAAFTISYVYSAELFPTIL. The Cytoplasmic portion of the chain corresponds to 449 to 452; it reads RQTG. A helical membrane pass occupies residues 453–473; it reads MGLVGIFSRIGGILTPLVILL. Topologically, residues 474–478 are extracellular; the sequence is GEYHA. Residues 479-499 form a helical membrane-spanning segment; that stretch reads ALPMLIYGSLPIVAGLLCTLL. The Cytoplasmic portion of the chain corresponds to 500–551; that stretch reads PETHGQGLKDTLQDLELGPHPRSPKSVPSEKETEAKGRTSSPGVAFVSSTYF. Residues 511–551 are disordered; it reads LQDLELGPHPRSPKSVPSEKETEAKGRTSSPGVAFVSSTYF. Residues 527–536 show a composition bias toward basic and acidic residues; that stretch reads PSEKETEAKG. The span at 537–551 shows a compositional bias: polar residues; sequence RTSSPGVAFVSSTYF.

Belongs to the major facilitator (TC 2.A.1) superfamily. Organic cation transporter (TC 2.A.1.19) family. Glycosylated. As to expression, ubiquitous. Highly expressed in kidneys and to a weaker extent in brain, heart, and intestine. In kidneys, expressed in proximal convoluted tubule. In kidneys, also expressed in cortical collecting duct, whereas glomerulus and thick ascending limb exhibit no expression.

It is found in the apical cell membrane. The enzyme catalyses urate(out) + (S)-lactate(in) = urate(in) + (S)-lactate(out). It catalyses the reaction urate(out) + succinate(in) = urate(in) + succinate(out). The catalysed reaction is urate(out) + glutathione(in) = urate(in) + glutathione(out). It carries out the reaction nicotinate(in) + urate(out) = nicotinate(out) + urate(in). The enzyme catalyses orotate(out) + a carboxylate(in) = orotate(in) + a carboxylate(out). Its function is as follows. Anion antiporter that mediates the transport of urate, orotate and nicotinate in exchange for organic or inorganic anions. Translocates urate and orotate across the apical membrane of proximal tubule epithelial cells and involved in urate renal reabsorption. Possibly involved in orotate renal reabsorption and nicotinate intestinal reabsorption. Mediates urate uptake by an exchange with organic anions such as (S)-lactate, succinate, glutathione and nicotinate. Urate and orotate transports are Cl(-)-dependent. Shows similar transport characteristics as the urate/orotate renal antiporter SLC22A12/URAT1 and may act as a compensator of SLC22A12/URAT1 in certain conditions. The chain is Solute carrier family 22 member 13 from Homo sapiens (Human).